Consider the following 421-residue polypeptide: Calreticulin (421 aa).

The signal sequence occupies residues 1–22 (MAFRVPNSSLLSLILLSLLAIA). An N-linked (GlcNAc...) asparagine glycan is attached at Asn56. Cys110 and Cys142 form a disulfide bridge. Positions 114, 116, 133, and 140 each coordinate an alpha-D-glucoside. Asn156 is a glycosylation site (N-linked (GlcNAc...) asparagine). 7 tandem repeats follow at residues 196-207 (KQTGSLYSDWDL), 215-226 (DPEAKKPEDWED), 232-243 (DPEDKKPEGYDD), 250-261 (DPDAKKPEDWDD), 265-275 (GEWTAPTIPNP), 279-289 (GEWKPKKIKNP), and 293-303 (GKWKAPLIDNP). The segment at 196–261 (KQTGSLYSDW…DAKKPEDWDD (66 aa)) is 4 X approximate repeats. The interval 217-283 (EAKKPEDWED…NPEYKGEWKP (67 aa)) is disordered. A compositionally biased stretch (acidic residues) spans 223–232 (DWEDQEYIPD). Basic and acidic residues predominate over residues 233–257 (PEDKKPEGYDDIPKEITDPDAKKPE). Residues 265–303 (GEWTAPTIPNPEYKGEWKPKKIKNPNFKGKWKAPLIDNP) are 3 X approximate repeats. Glu323 provides a ligand contact to an alpha-D-glucoside. Residues 350-380 (EETWGKQKDAEKAAFEELEKKLQEEESKEDP) show a composition bias toward basic and acidic residues. The disordered stretch occupies residues 350 to 421 (EETWGKQKDA…ETEAEKHDEL (72 aa)). The segment covering 381 to 399 (VDSDAEDDDNEAEDGEESD) has biased composition (acidic residues). A Prevents secretion from ER motif is present at residues 418-421 (HDEL).

This sequence belongs to the calreticulin family.

The protein localises to the endoplasmic reticulum lumen. Its function is as follows. Molecular calcium-binding chaperone promoting folding, oligomeric assembly and quality control in the ER via the calreticulin/calnexin cycle. This lectin may interact transiently with almost all of the monoglucosylated glycoproteins that are synthesized in the ER. This is Calreticulin from Prunus armeniaca (Apricot).